The chain runs to 467 residues: Glutamate--tRNA ligase (467 aa).

The 'HIGH' region signature appears at 14–24; sequence PSPTGFLHLGG. Positions 124 to 134 are enriched in basic and acidic residues; sequence PRYDGTWRPEP. The segment at 124-156 is disordered; that stretch reads PRYDGTWRPEPGKTLPPVPAGRKPVVRFKNPQD. The 'KMSKS' region signature appears at 246-250; it reads KLSKR. Residue Lys-249 coordinates ATP.

Belongs to the class-I aminoacyl-tRNA synthetase family. Glutamate--tRNA ligase type 1 subfamily. Monomer.

The protein localises to the cytoplasm. The enzyme catalyses tRNA(Glu) + L-glutamate + ATP = L-glutamyl-tRNA(Glu) + AMP + diphosphate. Catalyzes the attachment of glutamate to tRNA(Glu) in a two-step reaction: glutamate is first activated by ATP to form Glu-AMP and then transferred to the acceptor end of tRNA(Glu). The polypeptide is Glutamate--tRNA ligase (Bordetella petrii (strain ATCC BAA-461 / DSM 12804 / CCUG 43448)).